The chain runs to 82 residues: Small ribosomal subunit protein uS17 (82 aa).

The protein belongs to the universal ribosomal protein uS17 family. In terms of assembly, part of the 30S ribosomal subunit.

Its function is as follows. One of the primary rRNA binding proteins, it binds specifically to the 5'-end of 16S ribosomal RNA. In Rickettsia typhi (strain ATCC VR-144 / Wilmington), this protein is Small ribosomal subunit protein uS17.